A 458-amino-acid chain; its full sequence is Argininosuccinate lyase (458 aa).

The protein belongs to the lyase 1 family. Argininosuccinate lyase subfamily.

It localises to the cytoplasm. It catalyses the reaction 2-(N(omega)-L-arginino)succinate = fumarate + L-arginine. It functions in the pathway amino-acid biosynthesis; L-arginine biosynthesis; L-arginine from L-ornithine and carbamoyl phosphate: step 3/3. This chain is Argininosuccinate lyase, found in Neisseria meningitidis serogroup C / serotype 2a (strain ATCC 700532 / DSM 15464 / FAM18).